The primary structure comprises 182 residues: MPLLNSLATPYAEALLQVTEARGESQTVADQCKQLLEIWDSSADFRNAMVSPVLEPDAKKMALQALVGEQVTPSMLNLLKVLADRQRLLAFDAVMLRYLELYREQQGITLAEVRSAQTLTEDQQAALSKKVQAMAGTNMVDIDLSVDPSLIGGFVVSLGSQVIDASLAGQVRRLGLALAKAS.

This sequence belongs to the ATPase delta chain family. In terms of assembly, F-type ATPases have 2 components, F(1) - the catalytic core - and F(0) - the membrane proton channel. F(1) has five subunits: alpha(3), beta(3), gamma(1), delta(1), epsilon(1). CF(0) has four main subunits: a(1), b(1), b'(1) and c(10-14). The alpha and beta chains form an alternating ring which encloses part of the gamma chain. F(1) is attached to F(0) by a central stalk formed by the gamma and epsilon chains, while a peripheral stalk is formed by the delta, b and b' chains.

It is found in the cellular thylakoid membrane. F(1)F(0) ATP synthase produces ATP from ADP in the presence of a proton or sodium gradient. F-type ATPases consist of two structural domains, F(1) containing the extramembraneous catalytic core and F(0) containing the membrane proton channel, linked together by a central stalk and a peripheral stalk. During catalysis, ATP synthesis in the catalytic domain of F(1) is coupled via a rotary mechanism of the central stalk subunits to proton translocation. Its function is as follows. This protein is part of the stalk that links CF(0) to CF(1). It either transmits conformational changes from CF(0) to CF(1) or is implicated in proton conduction. The polypeptide is ATP synthase subunit delta (Parasynechococcus marenigrum (strain WH8102)).